Here is a 451-residue protein sequence, read N- to C-terminus: Cytochrome c biogenesis protein CcsB (451 aa).

3 helical membrane passes run 30–50 (LRLA…GTVI), 89–109 (TWWF…CTFT), and 175–195 (IGPI…IWGA).

It belongs to the Ccs1/CcsB family. May interact with CcsA.

The protein resides in the cellular thylakoid membrane. In terms of biological role, required during biogenesis of c-type cytochromes (cytochrome c6 and cytochrome f) at the step of heme attachment. This Crocosphaera subtropica (strain ATCC 51142 / BH68) (Cyanothece sp. (strain ATCC 51142)) protein is Cytochrome c biogenesis protein CcsB.